The chain runs to 128 residues: Con-Ins F1 (128 aa).

An N-terminal signal peptide occupies residues Met1–Gly24. Disulfide bonds link Cys29/Cys104, Cys41/Cys107, Cys53/Cys120, and Cys106/Cys111. Positions Leu59–Arg89 are cleaved as a propeptide — c peptide. 4-carboxyglutamate; partial is present on Glu115. Ser127 bears the Serine amide mark.

The protein belongs to the insulin family. In terms of assembly, heterodimer of A and B chains; disulfide-linked. Expressed by the venom gland.

The protein resides in the secreted. This venom insulin facilitates prey capture by rapidly inducing hypoglycemic shock. Intraperitoneal injection of this peptide into zebrafish lowers blood glucose with the same potency than human insulin. In vivo, when applied to water, this peptide reduces overall locomotor activity of zebrafish larvae, observed as a significant decrease in the percentage of time spent swimming and movement frequency. The polypeptide is Con-Ins F1 (Conus floridulus (Cone snail)).